A 107-amino-acid chain; its full sequence is uncharacterized protein (107 aa).

Belongs to the HesB/IscA family.

This is an uncharacterized protein from Azotobacter vinelandii.